The chain runs to 192 residues: NADH-quinone oxidoreductase subunit B 1 (192 aa).

Residues C71, C72, C136, and C166 each contribute to the [4Fe-4S] cluster site.

It belongs to the complex I 20 kDa subunit family. NDH-1 is composed of 14 different subunits. Subunits NuoB, C, D, E, F, and G constitute the peripheral sector of the complex. Requires [4Fe-4S] cluster as cofactor.

The protein resides in the cell inner membrane. The catalysed reaction is a quinone + NADH + 5 H(+)(in) = a quinol + NAD(+) + 4 H(+)(out). Functionally, NDH-1 shuttles electrons from NADH, via FMN and iron-sulfur (Fe-S) centers, to quinones in the respiratory chain. The immediate electron acceptor for the enzyme in this species is believed to be ubiquinone. Couples the redox reaction to proton translocation (for every two electrons transferred, four hydrogen ions are translocated across the cytoplasmic membrane), and thus conserves the redox energy in a proton gradient. This chain is NADH-quinone oxidoreductase subunit B 1, found in Rhizobium meliloti (strain 1021) (Ensifer meliloti).